Here is a 349-residue protein sequence, read N- to C-terminus: Phosphoribosylformylglycinamidine cyclo-ligase (349 aa).

The protein belongs to the AIR synthase family.

It localises to the cytoplasm. It catalyses the reaction 2-formamido-N(1)-(5-O-phospho-beta-D-ribosyl)acetamidine + ATP = 5-amino-1-(5-phospho-beta-D-ribosyl)imidazole + ADP + phosphate + H(+). Its pathway is purine metabolism; IMP biosynthesis via de novo pathway; 5-amino-1-(5-phospho-D-ribosyl)imidazole from N(2)-formyl-N(1)-(5-phospho-D-ribosyl)glycinamide: step 2/2. The polypeptide is Phosphoribosylformylglycinamidine cyclo-ligase (Bordetella petrii (strain ATCC BAA-461 / DSM 12804 / CCUG 43448)).